A 427-amino-acid chain; its full sequence is Serine hydroxymethyltransferase (427 aa).

120 to 122 (GHI) serves as a coordination point for (6S)-5,6,7,8-tetrahydrofolate. Lysine 226 carries the post-translational modification N6-(pyridoxal phosphate)lysine.

Belongs to the SHMT family. As to quaternary structure, homodimer. Requires pyridoxal 5'-phosphate as cofactor.

The protein localises to the cytoplasm. It participates in amino-acid biosynthesis; glycine biosynthesis; glycine from L-serine: step 1/1. Catalyzes the reversible interconversion of serine and glycine with a modified folate serving as the one-carbon carrier. Also exhibits a pteridine-independent aldolase activity toward beta-hydroxyamino acids, producing glycine and aldehydes, via a retro-aldol mechanism. In Pyrococcus abyssi (strain GE5 / Orsay), this protein is Serine hydroxymethyltransferase.